A 437-amino-acid polypeptide reads, in one-letter code: tRNA-queuosine alpha-mannosyltransferase (437 aa).

It belongs to the glycosyltransferase group 1 family. Glycosyltransferase 4 subfamily.

Its subcellular location is the cytoplasm. The protein localises to the nucleus. It carries out the reaction queuosine(34) in tRNA(Asp) + GDP-alpha-D-mannose = O-4''-alpha-D-mannosylqueuosine(34) in tRNA(Asp) + GDP + H(+). Functionally, glycosyltransferase that specifically catalyzes mannosylation of cytoplasmic tRNA(Asp) modified with queuosine at position 34 (queuosine(34)). Mannosylates the cyclopentene moiety of queuosine(34) in tRNA(Asp) to form mannosyl-queuosine(34). Mannosylation of queuosine(34) in tRNA(Asp) is required to slow-down elongation at cognate codons, GAC and GAU, thereby regulating protein translation. The chain is tRNA-queuosine alpha-mannosyltransferase (gtdc1) from Xenopus tropicalis (Western clawed frog).